The primary structure comprises 363 residues: Dihydroorotate dehydrogenase (quinone) (363 aa).

Residues 77-81 (AGMDK) and T101 contribute to the FMN site. Position 81 (K81) interacts with substrate. Position 126 to 130 (126 to 130 (NRMGF)) interacts with substrate. 2 residues coordinate FMN: S155 and N188. Substrate is bound at residue N188. The Nucleophile role is filled by S191. N193 is a substrate binding site. K234 and T262 together coordinate FMN. 263 to 264 (NT) contacts substrate. FMN is bound by residues G287, G316, and 337-338 (YT).

Belongs to the dihydroorotate dehydrogenase family. Type 2 subfamily. In terms of assembly, monomer. It depends on FMN as a cofactor.

It localises to the cell membrane. The enzyme catalyses (S)-dihydroorotate + a quinone = orotate + a quinol. It functions in the pathway pyrimidine metabolism; UMP biosynthesis via de novo pathway; orotate from (S)-dihydroorotate (quinone route): step 1/1. In terms of biological role, catalyzes the conversion of dihydroorotate to orotate with quinone as electron acceptor. In Chloroflexus aurantiacus (strain ATCC 29366 / DSM 635 / J-10-fl), this protein is Dihydroorotate dehydrogenase (quinone).